A 552-amino-acid polypeptide reads, in one-letter code: Hyaluronan synthase 2 (552 aa).

Topologically, residues 1–11 are cytoplasmic; it reads MHCERFLCILR. A helical membrane pass occupies residues 12-32; that stretch reads IIGTTLFGVSLLLGITAAYIV. Residues 33–45 are Extracellular-facing; it reads GYQFIQTDNYYFS. A helical membrane pass occupies residues 46 to 66; sequence FGLYGAFLASHLIIQSLFAFL. The Cytoplasmic segment spans residues 67–374; sequence EHRKMKKSLE…NAMWFHKHHL (308 aa). Phosphothreonine is present on Thr110. Residue Lys190 forms a Glycyl lysine isopeptide (Lys-Gly) (interchain with G-Cter in ubiquitin) linkage. Ser221 carries O-linked (GlcNAc) serine glycosylation. A Phosphothreonine modification is found at Thr328. The helical transmembrane segment at 375-395 threads the bilayer; it reads WMTYEAIITGFFPFFLIATVI. Residues 396–402 lie on the Extracellular side of the membrane; it reads QLFYRGK. The helical transmembrane segment at 403-423 threads the bilayer; it reads IWNILLFLLTVQLVGLIKSSF. Over 424–429 the chain is Cytoplasmic; sequence ASCLRG. The chain crosses the membrane as a helical span at residues 430–450; sequence NIVMVFMSLYSVLYMSSLLPA. Residues 451–475 lie on the Extracellular side of the membrane; sequence KMFAIATINKAGWGTSGRKTIVVNF. A helical membrane pass occupies residues 476–496; it reads IGLIPVSVWFTILLGGVIFTI. Residues 497–510 are Cytoplasmic-facing; that stretch reads YKESKRPFSESKQT. Residues 511–531 traverse the membrane as a helical segment; it reads VLIVGTLLYACYWVMLLTLYV. Over 532–552 the chain is Extracellular; the sequence is VLINKCGRRKKGQQYDMVLDV.

The protein belongs to the NodC/HAS family. In terms of assembly, homodimer; dimerization promotes enzymatic activity. Forms heterodimer with HAS3. Forms heterodimer with HAS1. The cofactor is Mg(2+). In terms of processing, phosphorylation at Thr-328 is essential for hyaluronan synthase activity. Phosphorylation at Thr-110 is required for transport from ER to Golgi. Post-translationally, O-GlcNAcylation at Ser-221 increases the stability of HAS2 and plasma membrane localization. Ubiquitination at Lys-190; this ubiquitination is essential for hyaluronan synthase activity and homo- or hetero-oligomerization. Can also be poly-ubiquitinated. Deubiquitinated by USP17 and USP4. USP17 efficiently removes 'Lys-63'- and 'Lys-48'-linked polyubiquitin chains, whereas USP4 preferentially removes monoubiquitination and, partially, both 'Lys-63'- and 'Lys-48'-linked polyubiquitin chain. Expressed in fibroblasts.

It localises to the cell membrane. It is found in the endoplasmic reticulum membrane. The protein resides in the vesicle. Its subcellular location is the golgi apparatus membrane. The protein localises to the lysosome. The catalysed reaction is [hyaluronan](n) + UDP-N-acetyl-alpha-D-glucosamine = N-acetyl-beta-D-glucosaminyl-(1-&gt;4)-[hyaluronan](n) + UDP + H(+). It carries out the reaction N-acetyl-beta-D-glucosaminyl-(1-&gt;4)-[hyaluronan](n) + UDP-alpha-D-glucuronate = [hyaluronan](n+1) + UDP + H(+). It functions in the pathway glycan biosynthesis; hyaluronan biosynthesis. With respect to regulation, regulated by several post-translational modifications such as ubiquitination/deubiquitination, phosphorylation and O-GlcNAcylation. The enzymatic activity depends on the availability of UDP-GlcUA and UDP-GlcNAc. In terms of biological role, catalyzes the addition of GlcNAc or GlcUA monosaccharides to the nascent hyaluronan polymer. Therefore, it is essential to hyaluronan synthesis a major component of most extracellular matrices that has a structural role in tissues architectures and regulates cell adhesion, migration and differentiation. This is one of three isoenzymes responsible for cellular hyaluronan synthesis and it is particularly responsible for the synthesis of high molecular mass hyaluronan. In Homo sapiens (Human), this protein is Hyaluronan synthase 2.